A 409-amino-acid chain; its full sequence is Beta-arrestin-2 (409 aa).

Phosphotyrosine is present on tyrosine 48. Hydroxyproline; by PHD2 occurs at positions 176 and 181. The tract at residues 240–409 is interaction with TRAF6; that stretch reads ADICLFSTAQ…KDDDYDDQLC (170 aa). Serine 360 carries the post-translational modification Phosphoserine. Residues 363-409 form an interaction with AP2B1 region; sequence PETDVPVDTNLIEFDTNYATDDDIVFEDFARLRLKGMKDDDYDDQLC. Phosphothreonine is present on threonine 382. Residues 385–395 carry the [DE]-X(1,2)-F-X-X-[FL]-X-X-X-R motif motif; it reads DIVFEDFARLR.

It belongs to the arrestin family. Homooligomer; the self-association is mediated by InsP6-binding. Heterooligomer with ARRB1; the association is mediated by InsP6-binding. Interacts with ADRB2 and CHRM2. Interacts with PDE4A. Interacts with PDE4D. Interacts with MAPK10, MAPK1 and MAPK3. Interacts with DRD2. Interacts with FSHR. Interacts with CLTC. Interacts with HTR2C. Interacts with CCR5. Interacts with CXCR4. Interacts with SRC. Interacts with DUSP16; the interaction is interrupted by stimulation of AGTR1 and activation of MAPK10. Interacts with CHUK; the interaction is enhanced stimulation of ADRB2. Interacts with RELA. Interacts with MDM2; the interaction is enhanced by activation of GPCRs. Interacts with SLC9A5. Interacts with TRAF6. Interacts with IGF1R. Interacts with ENG. Interacts with KIR2DL1, KIR2DL3 and KIR2DL4. Interacts with LDLR. Interacts with AP2B1. Interacts with C5AR1. Interacts with RAF1. Interacts with MAP2K1. Interacts with MAPK1. Interacts with MAPK10; the interaction enhances MAPK10 activation by MAP3K5. Interacts with MAP2K4; the interaction is enhanced by presence of MAP3K5 and MAPK10. Interacts with MAP3K5. Interacts with AKT1. Interacts with IKBKB and MAP3K14. Interacts with SMO (activated). Interacts with GSK3A and GSK3B. Associates with protein phosphatase 2A (PP2A). Interacts with DHX8; the interaction is detected in the nucleus upon OR1D2 stimulation. Interacts with GAPDHS; the interaction is detected in the nucleus upon OR1D2 stimulation. Interacts with H2AFX; the interaction is detected in the nucleus upon OR1D2 stimulation. Interacts with KIF14; the interaction is detected in the nucleus upon OR1D2 stimulation. Interacts with RCC1; the interaction is detected in the nucleus upon OR1D2 stimulation. Interacts with CXCR4; the interaction is dependent on C-terminal phosphorylation of CXCR4 and allows activation of MAPK1 and MAPK3. Interacts with GPR143. Interacts with HCK and CXCR1 (phosphorylated). Interacts with ACKR3 and ACKR4. Interacts with ARRDC1; the interaction is direct. Interacts with GPR61, GPR62 and GPR135. Interacts (via NACHT and LRR domains) with NLRP3; this interaction is direct and inducible by omega-3 polyunsaturated fatty acids (PUFAs). Interacts with FFAR4 (via C-terminus); this interaction is stimulated by long-chain fatty acids (LCFAs). Interacts with GPR35. Interacts with GPR84. Interacts with TIGIT; this interaction inhibits the NF-kappa-B pathway. Interacts with TGFBR3. In terms of processing, phosphorylated at Thr-382 in the cytoplasm; probably dephosphorylated at the plasma membrane. The phosphorylation does not regulate internalization and recycling of ADRB2, interaction with clathrin or AP2B1. The ubiquitination status appears to regulate the formation and trafficking of beta-arrestin-GPCR complexes and signaling. Ubiquitination appears to occur GPCR-specific. Ubiquitinated by MDM2; the ubiquitination is required for rapid internalization of ADRB2. Deubiquitinated by USP33; the deubiquitination leads to a dissociation of the beta-arrestin-GPCR complex. Stimulation of a class A GPCR, such as ADRB2, induces transient ubiquitination and subsequently promotes association with USP33. Stimulation of a class B GPCR promotes a sustained ubiquitination. Deubiquitinated by USP20; allowing USP20 to deubiquitinate TRAF6 leading to inhibition of NF-kappa-B signaling. Post-translationally, hydroxylation by PHD2 modulates the rate of internalization by slowing down recruitment to the plasma membrane and inhibiting subsequent co-internalization with class A receptors.

The protein resides in the cytoplasm. It is found in the nucleus. The protein localises to the cell membrane. It localises to the membrane. Its subcellular location is the clathrin-coated pit. The protein resides in the cytoplasmic vesicle. In terms of biological role, functions in regulating agonist-mediated G-protein coupled receptor (GPCR) signaling by mediating both receptor desensitization and resensitization processes. During homologous desensitization, beta-arrestins bind to the GPRK-phosphorylated receptor and sterically preclude its coupling to the cognate G-protein; the binding appears to require additional receptor determinants exposed only in the active receptor conformation. The beta-arrestins target many receptors for internalization by acting as endocytic adapters (CLASPs, clathrin-associated sorting proteins) and recruiting the GPRCs to the adapter protein 2 complex 2 (AP-2) in clathrin-coated pits (CCPs). However, the extent of beta-arrestin involvement appears to vary significantly depending on the receptor, agonist and cell type. Internalized arrestin-receptor complexes traffic to intracellular endosomes, where they remain uncoupled from G-proteins. Two different modes of arrestin-mediated internalization occur. Class A receptors, like ADRB2, OPRM1, ENDRA, D1AR and ADRA1B dissociate from beta-arrestin at or near the plasma membrane and undergo rapid recycling. Class B receptors, like AVPR2, AGTR1, NTSR1, TRHR and TACR1 internalize as a complex with arrestin and traffic with it to endosomal vesicles, presumably as desensitized receptors, for extended periods of time. Receptor resensitization then requires that receptor-bound arrestin is removed so that the receptor can be dephosphorylated and returned to the plasma membrane. Mediates endocytosis of CCR7 following ligation of CCL19 but not CCL21. Involved in internalization of P2RY1, P2RY4, P2RY6 and P2RY11 and ATP-stimulated internalization of P2RY2. Involved in phosphorylation-dependent internalization of OPRD1 and subsequent recycling or degradation. Involved in ubiquitination of IGF1R. Beta-arrestins function as multivalent adapter proteins that can switch the GPCR from a G-protein signaling mode that transmits short-lived signals from the plasma membrane via small molecule second messengers and ion channels to a beta-arrestin signaling mode that transmits a distinct set of signals that are initiated as the receptor internalizes and transits the intracellular compartment. Acts as a signaling scaffold for MAPK pathways such as MAPK1/3 (ERK1/2) and MAPK10 (JNK3). ERK1/2 and JNK3 activated by the beta-arrestin scaffold are largely excluded from the nucleus and confined to cytoplasmic locations such as endocytic vesicles, also called beta-arrestin signalosomes. Acts as a signaling scaffold for the AKT1 pathway. GPCRs for which the beta-arrestin-mediated signaling relies on both ARRB1 and ARRB2 (codependent regulation) include ADRB2, F2RL1 and PTH1R. For some GPCRs the beta-arrestin-mediated signaling relies on either ARRB1 or ARRB2 and is inhibited by the other respective beta-arrestin form (reciprocal regulation). Increases ERK1/2 signaling in AGTR1- and AVPR2-mediated activation (reciprocal regulation). Involved in CCR7-mediated ERK1/2 signaling involving ligand CCL19. Is involved in type-1A angiotensin II receptor/AGTR1-mediated ERK activity. Is involved in type-1A angiotensin II receptor/AGTR1-mediated MAPK10 activity. Is involved in dopamine-stimulated AKT1 activity in the striatum by disrupting the association of AKT1 with its negative regulator PP2A. Involved in AGTR1-mediated chemotaxis. Appears to function as signaling scaffold involved in regulation of MIP-1-beta-stimulated CCR5-dependent chemotaxis. Involved in attenuation of NF-kappa-B-dependent transcription in response to GPCR or cytokine stimulation by interacting with and stabilizing CHUK. Suppresses UV-induced NF-kappa-B-dependent activation by interacting with CHUK. The function is promoted by stimulation of ADRB2 and dephosphorylation of ARRB2. Involved in p53/TP53-mediated apoptosis by regulating MDM2 and reducing the MDM2-mediated degradation of p53/TP53. May serve as nuclear messenger for GPCRs. Upon stimulation of OR1D2, may be involved in regulation of gene expression during the early processes of fertilization. Also involved in regulation of receptors other than GPCRs. Involved in endocytosis of TGFBR2 and TGFBR3 and down-regulates TGF-beta signaling such as NF-kappa-B activation. Involved in endocytosis of low-density lipoprotein receptor/LDLR. Involved in endocytosis of smoothened homolog/Smo, which also requires GRK2. Involved in endocytosis of SLC9A5. Involved in endocytosis of ENG and subsequent TGF-beta-mediated ERK activation and migration of epithelial cells. Involved in Toll-like receptor and IL-1 receptor signaling through the interaction with TRAF6 which prevents TRAF6 autoubiquitination and oligomerization required for activation of NF-kappa-B and JUN. Involved in insulin resistance by acting as insulin-induced signaling scaffold for SRC, AKT1 and INSR. Involved in regulation of inhibitory signaling of natural killer cells by recruiting PTPN6 and PTPN11 to KIR2DL1. Involved in IL8-mediated granule release in neutrophils. Involved in the internalization of the atypical chemokine receptor ACKR3. Acts as an adapter protein coupling FFAR4 receptor to specific downstream signaling pathways, as well as mediating receptor endocytosis. During the activation step of NLRP3 inflammasome, directly associates with NLRP3 leading to inhibition of pro-inflammatory cytokine release and inhibition of inflammation. In Homo sapiens (Human), this protein is Beta-arrestin-2 (ARRB2).